Reading from the N-terminus, the 1157-residue chain is ATP-dependent helicase/deoxyribonuclease subunit B (1157 aa).

The UvrD-like helicase ATP-binding domain occupies 1–278 (MTLQIIAGRS…FFLENKRAKT (278 aa)). 8 to 15 (GRSGTGKT) provides a ligand contact to ATP. Residues 272–590 (ENKRAKTESL…VLSDMENAKL (319 aa)) enclose the UvrD-like helicase C-terminal domain. The [4Fe-4S] cluster site is built by Cys-794, Cys-1115, Cys-1118, and Cys-1124.

Belongs to the helicase family. AddB/RexB type 1 subfamily. As to quaternary structure, heterodimer of AddA and AddB. Requires Mg(2+) as cofactor. It depends on [4Fe-4S] cluster as a cofactor.

Its function is as follows. The heterodimer acts as both an ATP-dependent DNA helicase and an ATP-dependent, dual-direction single-stranded exonuclease. Recognizes the chi site generating a DNA molecule suitable for the initiation of homologous recombination. The AddB subunit has 5' -&gt; 3' nuclease activity but not helicase activity. The protein is ATP-dependent helicase/deoxyribonuclease subunit B of Listeria monocytogenes serotype 4a (strain HCC23).